Reading from the N-terminus, the 430-residue chain is UPF0597 protein BDI_1130 (430 aa).

This sequence belongs to the UPF0597 family.

In Parabacteroides distasonis (strain ATCC 8503 / DSM 20701 / CIP 104284 / JCM 5825 / NCTC 11152), this protein is UPF0597 protein BDI_1130.